Reading from the N-terminus, the 104-residue chain is L-rhamnose mutarotase (104 aa).

A substrate-binding site is contributed by Y18. H22 functions as the Proton donor in the catalytic mechanism. Residues Y41 and 76-77 (WW) contribute to the substrate site.

The protein belongs to the rhamnose mutarotase family. As to quaternary structure, homodimer.

It localises to the cytoplasm. The enzyme catalyses alpha-L-rhamnose = beta-L-rhamnose. It participates in carbohydrate metabolism; L-rhamnose metabolism. Functionally, involved in the anomeric conversion of L-rhamnose. The polypeptide is L-rhamnose mutarotase (Salmonella newport (strain SL254)).